A 288-amino-acid chain; its full sequence is Diaminopimelate epimerase (288 aa).

Substrate contacts are provided by N14 and N67. C76 (proton donor) is an active-site residue. Substrate is bound by residues 77-78, N166, N199, and 217-218; these read GN and ER. The active-site Proton acceptor is C226. 227-228 contacts substrate; sequence GT.

Belongs to the diaminopimelate epimerase family. In terms of assembly, homodimer.

It is found in the cytoplasm. The enzyme catalyses (2S,6S)-2,6-diaminopimelate = meso-2,6-diaminopimelate. The protein operates within amino-acid biosynthesis; L-lysine biosynthesis via DAP pathway; DL-2,6-diaminopimelate from LL-2,6-diaminopimelate: step 1/1. Its function is as follows. Catalyzes the stereoinversion of LL-2,6-diaminopimelate (L,L-DAP) to meso-diaminopimelate (meso-DAP), a precursor of L-lysine and an essential component of the bacterial peptidoglycan. The polypeptide is Diaminopimelate epimerase (Bacillus anthracis (strain A0248)).